The sequence spans 430 residues: Tyrosine--tRNA ligase (430 aa).

Tyrosine 32 serves as a coordination point for L-tyrosine. The short motif at 37 to 46 (PTADSLHIGH) is the 'HIGH' region element. L-tyrosine-binding residues include tyrosine 172 and glutamine 176. Residues 232–236 (KFGKT) carry the 'KMSKS' region motif. Lysine 235 lines the ATP pocket. Positions 362–429 (VKAVDLFVDN…GKKNYYLIIA (68 aa)) constitute an S4 RNA-binding domain.

Belongs to the class-I aminoacyl-tRNA synthetase family. TyrS type 1 subfamily. In terms of assembly, homodimer.

The protein localises to the cytoplasm. It carries out the reaction tRNA(Tyr) + L-tyrosine + ATP = L-tyrosyl-tRNA(Tyr) + AMP + diphosphate + H(+). In terms of biological role, catalyzes the attachment of tyrosine to tRNA(Tyr) in a two-step reaction: tyrosine is first activated by ATP to form Tyr-AMP and then transferred to the acceptor end of tRNA(Tyr). This chain is Tyrosine--tRNA ligase, found in Bacteroides fragilis (strain YCH46).